The following is a 36-amino-acid chain: Insecticidal toxin LaIT1 (36 aa).

Disulfide bonds link Cys-11-Cys-23 and Cys-17-Cys-29.

Expressed by the venom gland.

It localises to the secreted. In terms of biological role, affects the activity of both ryanodine-sensitive calcium-release channels RyR1 and RyR2 with high potency. At lower concentrations the toxin increases full openings of the RyRs, and at higher concentrations it inhibits full openings and induce openings to subconductance levels and reduces the number of full conductance openings. The different actions may be attributed to the toxins binding at different sites on the RyRs, with binding at a high-affinity site mediating the increase in full openings and the induction of subconductance states evoked upon binding to a lower-affinity site. Shows insect lethality against crickets and common cutworms (only shows paralysis against cockroaches), but no toxicity is observed in mice. This is Insecticidal toxin LaIT1 from Liocheles australasiae (Dwarf wood scorpion).